A 533-amino-acid polypeptide reads, in one-letter code: 2-succinyl-5-enolpyruvyl-6-hydroxy-3-cyclohexene-1-carboxylate synthase (533 aa).

Belongs to the TPP enzyme family. MenD subfamily. Homodimer. Mg(2+) serves as cofactor. Mn(2+) is required as a cofactor. It depends on thiamine diphosphate as a cofactor.

It catalyses the reaction isochorismate + 2-oxoglutarate + H(+) = 5-enolpyruvoyl-6-hydroxy-2-succinyl-cyclohex-3-ene-1-carboxylate + CO2. The protein operates within quinol/quinone metabolism; 1,4-dihydroxy-2-naphthoate biosynthesis; 1,4-dihydroxy-2-naphthoate from chorismate: step 2/7. It participates in quinol/quinone metabolism; menaquinone biosynthesis. Its function is as follows. Catalyzes the thiamine diphosphate-dependent decarboxylation of 2-oxoglutarate and the subsequent addition of the resulting succinic semialdehyde-thiamine pyrophosphate anion to isochorismate to yield 2-succinyl-5-enolpyruvyl-6-hydroxy-3-cyclohexene-1-carboxylate (SEPHCHC). This Akkermansia muciniphila (strain ATCC BAA-835 / DSM 22959 / JCM 33894 / BCRC 81048 / CCUG 64013 / CIP 107961 / Muc) protein is 2-succinyl-5-enolpyruvyl-6-hydroxy-3-cyclohexene-1-carboxylate synthase.